The sequence spans 87 residues: Large ribosomal subunit protein uL23c (87 aa).

Belongs to the universal ribosomal protein uL23 family. In terms of assembly, part of the 50S ribosomal subunit.

The protein localises to the plastid. It is found in the chloroplast. Its function is as follows. Binds to 23S rRNA. This Ostreococcus tauri protein is Large ribosomal subunit protein uL23c (rpl23).